Reading from the N-terminus, the 220-residue chain is Ribosomal RNA large subunit methyltransferase E (220 aa).

The S-adenosyl-L-methionine site is built by Gly60, Trp62, Asp92, Asp108, and Asp133. The active-site Proton acceptor is the Lys173.

Belongs to the class I-like SAM-binding methyltransferase superfamily. RNA methyltransferase RlmE family.

It is found in the cytoplasm. The enzyme catalyses uridine(2552) in 23S rRNA + S-adenosyl-L-methionine = 2'-O-methyluridine(2552) in 23S rRNA + S-adenosyl-L-homocysteine + H(+). Its function is as follows. Specifically methylates the uridine in position 2552 of 23S rRNA at the 2'-O position of the ribose in the fully assembled 50S ribosomal subunit. In Burkholderia thailandensis (strain ATCC 700388 / DSM 13276 / CCUG 48851 / CIP 106301 / E264), this protein is Ribosomal RNA large subunit methyltransferase E.